Here is a 498-residue protein sequence, read N- to C-terminus: ATP synthase subunit beta, chloroplastic (498 aa).

172–179 lines the ATP pocket; sequence GGAGVGKT.

It belongs to the ATPase alpha/beta chains family. As to quaternary structure, F-type ATPases have 2 components, CF(1) - the catalytic core - and CF(0) - the membrane proton channel. CF(1) has five subunits: alpha(3), beta(3), gamma(1), delta(1), epsilon(1). CF(0) has four main subunits: a(1), b(1), b'(1) and c(9-12).

Its subcellular location is the plastid. It is found in the chloroplast thylakoid membrane. The catalysed reaction is ATP + H2O + 4 H(+)(in) = ADP + phosphate + 5 H(+)(out). Produces ATP from ADP in the presence of a proton gradient across the membrane. The catalytic sites are hosted primarily by the beta subunits. In Coffea arabica (Arabian coffee), this protein is ATP synthase subunit beta, chloroplastic.